A 137-amino-acid chain; its full sequence is Fluoride-specific ion channel FluC (137 aa).

4 consecutive transmembrane segments (helical) span residues 11 to 31 (IAVSLGAIAGALSRYYLSLWF), 42 to 62 (GTLFINITGCLAMGFFYALAL), 75 to 95 (LIAVGFLGAYTTFSTYALDTF), and 107 to 127 (GFYWAGSTILGVISIQIGIIL). Residues G82 and T85 each coordinate Na(+).

It belongs to the fluoride channel Fluc/FEX (TC 1.A.43) family.

It localises to the cell inner membrane. The enzyme catalyses fluoride(in) = fluoride(out). Its activity is regulated as follows. Na(+) is not transported, but it plays an essential structural role and its presence is essential for fluoride channel function. Fluoride-specific ion channel. Important for reducing fluoride concentration in the cell, thus reducing its toxicity. The protein is Fluoride-specific ion channel FluC of Trichormus variabilis (strain ATCC 29413 / PCC 7937) (Anabaena variabilis).